A 138-amino-acid polypeptide reads, in one-letter code: Protein FAM136A (138 aa).

Ala2 carries the N-acetylalanine modification. Thr124 and Thr126 each carry phosphothreonine.

It belongs to the FAM136 family.

This Mus musculus (Mouse) protein is Protein FAM136A (Fam136a).